Here is a 98-residue protein sequence, read N- to C-terminus: Beta-2-microglobulin (98 aa).

The Ig-like C1-type domain maps to 4–92; it reads PKVQVYSRFP…HETLKEPQVY (89 aa). A disulfide bond links C24 and C79.

This sequence belongs to the beta-2-microglobulin family. As to quaternary structure, heterodimer of an alpha chain and a beta chain. Beta-2-microglobulin is the beta-chain of major histocompatibility complex class I molecules.

It localises to the secreted. Functionally, component of the class I major histocompatibility complex (MHC). Involved in the presentation of peptide antigens to the immune system. The polypeptide is Beta-2-microglobulin (B2M) (Meleagris gallopavo (Wild turkey)).